The chain runs to 455 residues: tRNA modification GTPase MnmE (455 aa).

(6S)-5-formyl-5,6,7,8-tetrahydrofolate contacts are provided by Arg24, Glu81, and Lys120. The TrmE-type G domain occupies 216–378; sequence GMTVVIAGRP…LREHLKACMG (163 aa). Asn226 is a K(+) binding site. GTP is bound by residues 226–231, 245–251, 270–273, 335–338, and 359–361; these read NAGKSS, TDIAGTT, DTAG, NKAD, and SAR. Ser230 contributes to the Mg(2+) binding site. Residues Thr245, Ile247, and Thr250 each coordinate K(+). A Mg(2+)-binding site is contributed by Thr251. A (6S)-5-formyl-5,6,7,8-tetrahydrofolate-binding site is contributed by Lys455.

The protein belongs to the TRAFAC class TrmE-Era-EngA-EngB-Septin-like GTPase superfamily. TrmE GTPase family. Homodimer. Heterotetramer of two MnmE and two MnmG subunits. K(+) serves as cofactor.

The protein localises to the cytoplasm. Exhibits a very high intrinsic GTPase hydrolysis rate. Involved in the addition of a carboxymethylaminomethyl (cmnm) group at the wobble position (U34) of certain tRNAs, forming tRNA-cmnm(5)s(2)U34. The polypeptide is tRNA modification GTPase MnmE (Pseudomonas aeruginosa (strain ATCC 15692 / DSM 22644 / CIP 104116 / JCM 14847 / LMG 12228 / 1C / PRS 101 / PAO1)).